Here is a 113-residue protein sequence, read N- to C-terminus: Flagellar hook-basal body complex protein FliE (113 aa).

This sequence belongs to the FliE family.

The protein resides in the bacterial flagellum basal body. The chain is Flagellar hook-basal body complex protein FliE from Rhizobium leguminosarum bv. trifolii (strain WSM2304).